Here is a 381-residue protein sequence, read N- to C-terminus: MSLNMFWFLPTHGDGHYLGTEEGSRPVDHGYLQQIAQAADRLGYTGVLIPTGRSCEDAWLVAASMIPVTQRLKFLVALRPSVTSPTVAARQAATLDRLSNGRALFNLVTGSDPQELAGDGVFLDHSERYEASAEFTQVWRRLLLGETVDFNGKHIHVRGAKLLFPPIQQPYPPLYFGGSSDVAQELAAEQVDLYLTWGEPPELVKEKIEQVRAKAAAHGRKIRFGIRLHVIVRETNGEAWQAAERLISHLDDETIAKAQAAFARTDSVGQQRMAALHNGKRDNLEISPNLWAGVGLVRGGAGTALVGDGPTVAARINEYAALGIDSFVLSGYPHLEEAYRVGELLFPHLDVAIPEIPQPQPLNPQGEAVANDFIPRNVAQS.

The protein belongs to the SsuD family. Homotetramer.

The enzyme catalyses an alkanesulfonate + FMNH2 + O2 = an aldehyde + FMN + sulfite + H2O + 2 H(+). Functionally, catalyzes the desulfonation of aliphatic sulfonates. This chain is Alkanesulfonate monooxygenase, found in Escherichia coli (strain SMS-3-5 / SECEC).